The chain runs to 564 residues: Nucleolus and neural progenitor protein (564 aa).

Positions 431–495 (GSRTSTSEHP…KRRCSGTVQR (65 aa)) are disordered. A compositionally biased stretch (basic residues) spans 442 to 459 (RQRRSKYKVLSRQRKPQR). The nuclear localization signal stretch occupies residues 442-460 (RQRRSKYKVLSRQRKPQRK). The segment covering 460–473 (KLQSTLLKETQQVP) has biased composition (polar residues).

This sequence belongs to the nepro family.

The protein localises to the nucleus. It localises to the nucleolus. In terms of biological role, may play a role in cortex development as part of the Notch signaling pathway. Downstream of Notch may repress the expression of proneural genes and inhibit neuronal differentiation thereby maintaining neural progenitors. May also play a role in preimplentation embryo development. The polypeptide is Nucleolus and neural progenitor protein (Mus musculus (Mouse)).